Here is a 354-residue protein sequence, read N- to C-terminus: MQLIKCLVIIQLSLLLVEESFAGRDFYKILNVKKNANTNEVKKAYRRLAKELHPDKNKDDPDASTKFQDLGAAYEVLSNPDKRKTYDRCGEECLKKEGMMDHGGDPFSSFFGDFGFHFGGDGQQQDAPRGADIVMDLYVSLEELYSGNFVEIVRNKPVTKPASGTRKCNCRQEMVTRNLGPGRFQMIQQTVCDECPNVKLVNEERTLEIEVEQGMVDGQETRFVAEGEPHIDGEPGDLIVRVQQMPHPRFLRKNDDLYTNVTISLQDALVGFSMEIKHLDGHLVPVTREKVTWPGARIRKKGEGMPNFENNNLTGNLYITFDVEFPKKDLTEEDKEALKKILDQSSINRIYNGL.

An N-terminal signal peptide occupies residues 1–22 (MQLIKCLVIIQLSLLLVEESFA). In terms of domain architecture, J spans 25–90 (DFYKILNVKK…DKRKTYDRCG (66 aa)). N-linked (GlcNAc...) asparagine glycosylation is found at N260 and N312.

In the testes, detected at low levels in somatic hub cells, cyst stem cells and the apical tip (at protein level). Levels in the testes decrease with age (at protein level). Expressed at low levels in hub cells, cyst stem cells and germline stem cells, and at high levels in spermatocytes and cyst cells.

It is found in the nucleus. Its subcellular location is the cell membrane. The protein localises to the secreted. Functionally, maintains stem cell niche architecture in the testes. Activates an extracellular integrin beta-PS pathway which regulates DE-cadherin (shg) levels in somatic hub cells, and is essential for maintaining the number of germline stem cells and the structure and localization of hub cells. The sequence is that of DnaJ homolog shv from Drosophila melanogaster (Fruit fly).